The chain runs to 487 residues: Betaine aldehyde dehydrogenase (487 aa).

K(+) is bound by residues Ile27 and Asp93. An NAD(+)-binding site is contributed by Gly149–Trp151. Lys161 (charge relay system) is an active-site residue. NAD(+) is bound by residues Lys175–Glu178 and Ser228–Thr231. Leu243 contributes to the K(+) binding site. The Proton acceptor role is filled by Glu249. Gly251, Cys283, and Glu384 together coordinate NAD(+). Cys283 (nucleophile) is an active-site residue. Residue Cys283 is modified to Cysteine sulfenic acid (-SOH). K(+) is bound by residues Lys454 and Gly457. Catalysis depends on Glu461, which acts as the Charge relay system.

This sequence belongs to the aldehyde dehydrogenase family. Dimer of dimers. K(+) serves as cofactor.

The catalysed reaction is betaine aldehyde + NAD(+) + H2O = glycine betaine + NADH + 2 H(+). It participates in amine and polyamine biosynthesis; betaine biosynthesis via choline pathway; betaine from betaine aldehyde: step 1/1. In terms of biological role, involved in the biosynthesis of the osmoprotectant glycine betaine. Catalyzes the irreversible oxidation of betaine aldehyde to the corresponding acid. This is Betaine aldehyde dehydrogenase from Brucella canis (strain ATCC 23365 / NCTC 10854 / RM-666).